The primary structure comprises 376 residues: Branched-chain-amino-acid aminotransferase, cytosolic (376 aa).

Lysine 202 carries the post-translational modification N6-(pyridoxal phosphate)lysine.

It belongs to the class-IV pyridoxal-phosphate-dependent aminotransferase family. It depends on pyridoxal 5'-phosphate as a cofactor.

Its subcellular location is the cytoplasm. The enzyme catalyses L-leucine + 2-oxoglutarate = 4-methyl-2-oxopentanoate + L-glutamate. It catalyses the reaction L-isoleucine + 2-oxoglutarate = (S)-3-methyl-2-oxopentanoate + L-glutamate. It carries out the reaction L-valine + 2-oxoglutarate = 3-methyl-2-oxobutanoate + L-glutamate. The catalysed reaction is a 2-oxocarboxylate + L-methionine = 4-methylsulfanyl-2-oxobutanoate + an L-alpha-amino acid. It participates in amino-acid biosynthesis; L-isoleucine biosynthesis; L-isoleucine from 2-oxobutanoate: step 4/4. Its pathway is amino-acid biosynthesis; L-leucine biosynthesis; L-leucine from 3-methyl-2-oxobutanoate: step 4/4. It functions in the pathway amino-acid biosynthesis; L-valine biosynthesis; L-valine from pyruvate: step 4/4. The protein operates within amino-acid biosynthesis; L-methionine biosynthesis via salvage pathway; L-methionine from S-methyl-5-thio-alpha-D-ribose 1-phosphate: step 6/6. Its function is as follows. Cytoplasmic isozyme of branched-chain-amino-acid aminotransferase, which catalyzes the first reaction in the catabolism of the essential branched chain amino acids (BCAAs) leucine, isoleucine, and valine. Catalyzes the formation of methionine from 2-keto-4-methylthiobutyrate (KMTB) in the methionine salvage pathway primarily using BCAAs (leucine, isoleucine, and valine) as well as lysine and proline as the amino donors. Involved in cell cycle regulation. The protein is Branched-chain-amino-acid aminotransferase, cytosolic of Saccharomyces cerevisiae (strain ATCC 204508 / S288c) (Baker's yeast).